The chain runs to 463 residues: MKHKVKHIHFVGVGGSGMSGIAEVLAHLDFTVTGSDLAASATTRRLEGEGVKVTVGHAAENIAGADAVVISTAVKADNPEVIAARERKIPVVPRAQMLAELMRLKSGIAIAGTHGKTTTTSLVTSILAEGGIDPTFVIGGRLNAAGANARLGSGDFLVAEADESDASFLFLSPVISVVTNIDADHMETYGHDFERLKSAFVDFLNRLPFYGVAVVCGDDANIRDILPRVPKQIITYGLSNECNFHAENIVADNGQMRFDCVRVNGTTSRLSITLNTPGMHNVLNALAAIAVATEVQVSDAAIVKALAEFKGVGRRFQRYGEVALPAGGSFTLVDDYGHHPVEMAATLAAARGAFPGRRLVLAFQPHRYTRTRDCFEDFVKVLSTVDALCLAEIYAAGEAPIVAADGRSLARALRVSGKVEPVFVEDIAAMPQTIMDVARDGDVVLCMGAGSIGAVPGKVAEFK.

Gly112–Thr118 provides a ligand contact to ATP.

It belongs to the MurCDEF family.

Its subcellular location is the cytoplasm. It catalyses the reaction UDP-N-acetyl-alpha-D-muramate + L-alanine + ATP = UDP-N-acetyl-alpha-D-muramoyl-L-alanine + ADP + phosphate + H(+). Its pathway is cell wall biogenesis; peptidoglycan biosynthesis. Cell wall formation. This is UDP-N-acetylmuramate--L-alanine ligase from Dechloromonas aromatica (strain RCB).